A 406-amino-acid polypeptide reads, in one-letter code: Formate-dependent phosphoribosylglycinamide formyltransferase (406 aa).

N(1)-(5-phospho-beta-D-ribosyl)glycinamide contacts are provided by residues 27–28 (EL) and glutamate 87. ATP-binding positions include arginine 120, lysine 162, 167-172 (SSGKGQ), 202-205 (EGFI), and glutamate 210. The ATP-grasp domain maps to 125–320 (RLAAETLGLP…EFELHARALL (196 aa)). Glutamate 279 and glutamate 291 together coordinate Mg(2+). Residues aspartate 298, lysine 367, and 374 to 375 (RR) each bind N(1)-(5-phospho-beta-D-ribosyl)glycinamide.

It belongs to the PurK/PurT family. In terms of assembly, homodimer.

The catalysed reaction is N(1)-(5-phospho-beta-D-ribosyl)glycinamide + formate + ATP = N(2)-formyl-N(1)-(5-phospho-beta-D-ribosyl)glycinamide + ADP + phosphate + H(+). It functions in the pathway purine metabolism; IMP biosynthesis via de novo pathway; N(2)-formyl-N(1)-(5-phospho-D-ribosyl)glycinamide from N(1)-(5-phospho-D-ribosyl)glycinamide (formate route): step 1/1. Involved in the de novo purine biosynthesis. Catalyzes the transfer of formate to 5-phospho-ribosyl-glycinamide (GAR), producing 5-phospho-ribosyl-N-formylglycinamide (FGAR). Formate is provided by PurU via hydrolysis of 10-formyl-tetrahydrofolate. The chain is Formate-dependent phosphoribosylglycinamide formyltransferase from Bordetella bronchiseptica (strain ATCC BAA-588 / NCTC 13252 / RB50) (Alcaligenes bronchisepticus).